Consider the following 273-residue polypeptide: Kit ligand (273 aa).

A signal peptide spans 1 to 25 (MKKTQTWILTCIYLQLLLFNPLVKT). Residues 26 to 214 (EGICRNRVTN…KNPPGDSSLH (189 aa)) lie on the Extracellular side of the membrane. Disulfide bonds link Cys-29-Cys-114 and Cys-68-Cys-163. N-linked (GlcNAc...) asparagine; partial glycans are attached at residues Asn-90 and Asn-118. Asn-145 carries N-linked (GlcNAc...) asparagine glycosylation. Residue Ser-167 is glycosylated (O-linked (GalNAc...) serine). O-linked (GalNAc...) threonine glycans are attached at residues Thr-168 and Thr-180. Residue Asn-195 is glycosylated (N-linked (GlcNAc...) asparagine). Residues 215-237 (WAAMALPALFSLIIGFAFGALYW) form a helical membrane-spanning segment. Residues 238-273 (KKRQPSLTRAVENIQINEEDNEISMLQEKEREFQEV) lie on the Cytoplasmic side of the membrane.

Belongs to the SCF family. In terms of assembly, homodimer, non-covalently linked. Heterotetramer with KIT, binding two KIT molecules; thereby mediates KIT dimerization and subsequent activation by autophosphorylation. Post-translationally, a soluble form (sKITLG) is produced by proteolytic processing of isoform 1 in the extracellular domain. Found in two differentially glycosylated forms, LMW-SCF and HMW-SCF. LMW-SCF is fully N-glycosylated at Asn-145, partially N-glycosylated at Asn-90, O-glycosylated at Ser-167, Thr-168 and Thr-180, and not glycosylated at Asn-97 or Asn-118. HMW-SCF is N-glycosylated at Asn-118, Asn-90 and Asn-145, O-glycosylated at Ser-167, Thr-168 and Thr-180, and not glycosylated at Asn-97. In terms of processing, a soluble form exists as a cleavage product of the extracellular domain.

It localises to the cell membrane. It is found in the cytoplasm. Its subcellular location is the cytoskeleton. The protein resides in the cell projection. The protein localises to the lamellipodium. It localises to the filopodium. It is found in the secreted. Its function is as follows. Ligand for the receptor-type protein-tyrosine kinase KIT. Plays an essential role in the regulation of cell survival and proliferation, hematopoiesis, stem cell maintenance, gametogenesis, mast cell development, migration and function, and in melanogenesis. KITLG/SCF binding can activate several signaling pathways. Promotes phosphorylation of PIK3R1, the regulatory subunit of phosphatidylinositol 3-kinase, and subsequent activation of the kinase AKT1. KITLG/SCF and KIT also transmit signals via GRB2 and activation of RAS, RAF1 and the MAP kinases MAPK1/ERK2 and/or MAPK3/ERK1. KITLG/SCF and KIT promote activation of STAT family members STAT1, STAT3 and STAT5. KITLG/SCF and KIT promote activation of PLCG1, leading to the production of the cellular signaling molecules diacylglycerol and inositol 1,4,5-trisphosphate. KITLG/SCF acts synergistically with other cytokines, probably interleukins. This is Kit ligand from Homo sapiens (Human).